A 403-amino-acid polypeptide reads, in one-letter code: E2F transcription factor-like E2FE (403 aa).

Residues arginine 34–glycine 99 mediate DNA binding. Positions valine 128 to aspartate 167 are disordered. Positions glutamine 142–serine 152 are enriched in low complexity. The span at lysine 153 to proline 163 shows a compositional bias: polar residues. A DNA-binding region spans residues arginine 169–glycine 250. Residues valine 282–histidine 319 form a disordered region.

The protein belongs to the E2F/DP family. Expressed exclusively in mitotically dividing cells. Highly expressed in young leaves and mature flowers. Lower expression in young stalk and in young and mature flowers.

It is found in the nucleus. Inhibitor of E2F-dependent activation of gene expression. Binds specifically the E2 recognition site without interacting with DP proteins and prevents transcription activation by E2F/DP heterodimers. Controls the timing of endocycle onset and inhibits endoreduplication. The polypeptide is E2F transcription factor-like E2FE (E2FE) (Arabidopsis thaliana (Mouse-ear cress)).